The primary structure comprises 322 residues: Phosphatidylserine decarboxylase proenzyme (322 aa).

Active-site charge relay system; for autoendoproteolytic cleavage activity residues include D90, H147, and S254. Residue S254 is the Schiff-base intermediate with substrate; via pyruvic acid; for decarboxylase activity of the active site. S254 bears the Pyruvic acid (Ser); by autocatalysis mark. The disordered stretch occupies residues 292-322 (TPDAEPSPLPAEEIEAEHDASPLVDDKKDQV). Residues 308 to 322 (EHDASPLVDDKKDQV) show a composition bias toward basic and acidic residues.

It belongs to the phosphatidylserine decarboxylase family. PSD-B subfamily. Prokaryotic type I sub-subfamily. In terms of assembly, heterodimer of a large membrane-associated beta subunit and a small pyruvoyl-containing alpha subunit. The cofactor is pyruvate. Post-translationally, is synthesized initially as an inactive proenzyme. Formation of the active enzyme involves a self-maturation process in which the active site pyruvoyl group is generated from an internal serine residue via an autocatalytic post-translational modification. Two non-identical subunits are generated from the proenzyme in this reaction, and the pyruvate is formed at the N-terminus of the alpha chain, which is derived from the carboxyl end of the proenzyme. The autoendoproteolytic cleavage occurs by a canonical serine protease mechanism, in which the side chain hydroxyl group of the serine supplies its oxygen atom to form the C-terminus of the beta chain, while the remainder of the serine residue undergoes an oxidative deamination to produce ammonia and the pyruvoyl prosthetic group on the alpha chain. During this reaction, the Ser that is part of the protease active site of the proenzyme becomes the pyruvoyl prosthetic group, which constitutes an essential element of the active site of the mature decarboxylase.

It localises to the cell membrane. The enzyme catalyses a 1,2-diacyl-sn-glycero-3-phospho-L-serine + H(+) = a 1,2-diacyl-sn-glycero-3-phosphoethanolamine + CO2. It participates in phospholipid metabolism; phosphatidylethanolamine biosynthesis; phosphatidylethanolamine from CDP-diacylglycerol: step 2/2. Functionally, catalyzes the formation of phosphatidylethanolamine (PtdEtn) from phosphatidylserine (PtdSer). This is Phosphatidylserine decarboxylase proenzyme from Escherichia coli O7:K1 (strain IAI39 / ExPEC).